The primary structure comprises 316 residues: Nucleoside diphosphate-linked moiety X motif 6 (316 aa).

Positions 141–273 (SHQVGVAGAV…TSRVARLLLY (133 aa)) constitute a Nudix hydrolase domain. The Nudix box signature appears at 176–197 (GLSEPEEDIGDTAVREVFEETG).

This sequence belongs to the Nudix hydrolase family. In terms of assembly, monomer and homodimer. In terms of tissue distribution, detected in liver, kidney and esophagus (at protein level). Ubiquitous.

The protein localises to the cytoplasm. The protein resides in the nucleus. It localises to the mitochondrion. Functionally, may contribute to the regulation of cell proliferation. The sequence is that of Nucleoside diphosphate-linked moiety X motif 6 (NUDT6) from Homo sapiens (Human).